The chain runs to 78 residues: Small ribosomal subunit protein bS20 (78 aa).

The protein belongs to the bacterial ribosomal protein bS20 family.

In terms of biological role, binds directly to 16S ribosomal RNA. The polypeptide is Small ribosomal subunit protein bS20 (Streptococcus pneumoniae serotype 2 (strain D39 / NCTC 7466)).